A 199-amino-acid polypeptide reads, in one-letter code: Imidazoleglycerol-phosphate dehydratase (199 aa).

The protein belongs to the imidazoleglycerol-phosphate dehydratase family.

The protein localises to the cytoplasm. It catalyses the reaction D-erythro-1-(imidazol-4-yl)glycerol 3-phosphate = 3-(imidazol-4-yl)-2-oxopropyl phosphate + H2O. It functions in the pathway amino-acid biosynthesis; L-histidine biosynthesis; L-histidine from 5-phospho-alpha-D-ribose 1-diphosphate: step 6/9. This Paramagnetospirillum magneticum (strain ATCC 700264 / AMB-1) (Magnetospirillum magneticum) protein is Imidazoleglycerol-phosphate dehydratase.